A 398-amino-acid polypeptide reads, in one-letter code: Dual-specificity RNA methyltransferase RlmN (398 aa).

Catalysis depends on glutamate 100, which acts as the Proton acceptor. The Radical SAM core domain occupies 106–345 (DGDRGTLCVS…TTVRTTRGDD (240 aa)). Cysteine 113 and cysteine 350 are oxidised to a cystine. The [4Fe-4S] cluster site is built by cysteine 120, cysteine 124, and cysteine 127. S-adenosyl-L-methionine-binding positions include 174-175 (GE), serine 206, 228-230 (SLH), and asparagine 307. Cysteine 350 functions as the S-methylcysteine intermediate in the catalytic mechanism.

This sequence belongs to the radical SAM superfamily. RlmN family. Requires [4Fe-4S] cluster as cofactor.

It is found in the cytoplasm. The catalysed reaction is adenosine(2503) in 23S rRNA + 2 reduced [2Fe-2S]-[ferredoxin] + 2 S-adenosyl-L-methionine = 2-methyladenosine(2503) in 23S rRNA + 5'-deoxyadenosine + L-methionine + 2 oxidized [2Fe-2S]-[ferredoxin] + S-adenosyl-L-homocysteine. It catalyses the reaction adenosine(37) in tRNA + 2 reduced [2Fe-2S]-[ferredoxin] + 2 S-adenosyl-L-methionine = 2-methyladenosine(37) in tRNA + 5'-deoxyadenosine + L-methionine + 2 oxidized [2Fe-2S]-[ferredoxin] + S-adenosyl-L-homocysteine. In terms of biological role, specifically methylates position 2 of adenine 2503 in 23S rRNA and position 2 of adenine 37 in tRNAs. m2A2503 modification seems to play a crucial role in the proofreading step occurring at the peptidyl transferase center and thus would serve to optimize ribosomal fidelity. This chain is Dual-specificity RNA methyltransferase RlmN, found in Saccharophagus degradans (strain 2-40 / ATCC 43961 / DSM 17024).